Here is a 377-residue protein sequence, read N- to C-terminus: MESVDQSCSVPPGFRFHPTDEELVGYYLRKKVASQKIDLDVIRDIDLYRIEPWDLQESCRIGYEERNEWYFFSHKDKKYPTGTRTNRATMAGFWKATGRDKAVYDKSKLIGMRKTLVFYKGRAPNGQKTDWIMHEYRLESDENAPPQEEGWVVCRAFKKKPMTGQAKNTETWSSSYFYDELPSGVRSVTEPLNYVSKQKQNVFAQDLMFKQELEGSDIGLNFIHCDQFIQLPQLESPSLPLTKRPVSLTSITSLEKNKNIYKRHLIEEDVSFNALISSGNKDKKKKKTSVMTTDWRALDKFVASQLMSQEDGVSGFGGHHEEDNNKIGHYNNEESNNKGSVETASSTLLSDREEENRFISGLLCSNLDYDLYRDLHV.

The 150-residue stretch at 10–159 (VPPGFRFHPT…GWVVCRAFKK (150 aa)) folds into the NAC domain. Residues 110-165 (IGMRKTLVFYKGRAPNGQKTDWIMHEYRLESDENAPPQEEGWVVCRAFKKKPMTGQ) mediate DNA binding. The segment at 312–347 (GVSGFGGHHEEDNNKIGHYNNEESNNKGSVETASST) is disordered. The span at 318–336 (GHHEEDNNKIGHYNNEESN) shows a compositional bias: basic and acidic residues. Residues 337–347 (NKGSVETASST) are compositionally biased toward polar residues.

This sequence belongs to the plant vascular related NAC-domain protein family. In terms of assembly, interacts with NAC030/VND7. Detected in root protoxylem and metaxylem poles and in vessels of protoxylems, outermost metaxylems, inner metaxylems, shoots and hypocotyls. Expressed in roots, hypocotyls, cotyledons and leaves. Present in developing xylems. Specifically expressed in vessels but not in interfascicular fibers in stems.

The protein localises to the nucleus. Functionally, transcription activator that binds to the secondary wall NAC binding element (SNBE), 5'-(T/A)NN(C/T)(T/C/G)TNNNNNNNA(A/C)GN(A/C/T)(A/T)-3', in the promoter of target genes. Involved in xylem formation by promoting the expression of secondary wall-associated transcription factors and of genes involved in secondary wall biosynthesis and programmed cell death, genes driven by the secondary wall NAC binding element (SNBE). Triggers thickening of secondary walls. This chain is NAC domain-containing protein 76, found in Arabidopsis thaliana (Mouse-ear cress).